Consider the following 460-residue polypeptide: Interleukin-1 receptor-associated kinase 4 (460 aa).

Met-1 carries the N-acetylmethionine modification. Positions 20–104 (RKLSDFIDPQ…APASLLLPDA (85 aa)) constitute a Death domain. Lys-34 is subject to N6-acetyllysine. Residues 186-454 (SVGGNKMGEG…PDIKKVQQLL (269 aa)) enclose the Protein kinase domain. ATP contacts are provided by residues 192–200 (MGEGGFGVV) and Lys-213. Residue Asp-311 is the Proton acceptor of the active site. Residues 313–316 (KSAN) and Asp-329 each bind ATP. 2 positions are modified to phosphothreonine: Thr-342 and Thr-345. The residue at position 346 (Ser-346) is a Phosphoserine.

The protein belongs to the protein kinase superfamily. TKL Ser/Thr protein kinase family. Pelle subfamily. As to quaternary structure, associates with MYD88 and IRAK2 to form a ternary complex called the Myddosome. Once phosphorylated, IRAK4 dissociates from the receptor complex and then associates with the TNF receptor-associated factor 6 (TRAF6), IRAK1, and PELI1; this intermediate complex is required for subsequent NF-kappa-B activation. Direct binding of SMAD6 to PELI1 prevents complex formation and hence negatively regulates IL1R-TLR signaling and eventually NF-kappa-B-mediated gene expression. Interacts with IL1RL1. Interacts (when phosphorylated) with IRAK1. May interact (when phosphorylated) with IRAK3. The cofactor is Mg(2+). Post-translationally, phosphorylated.

It localises to the cytoplasm. The enzyme catalyses L-seryl-[protein] + ATP = O-phospho-L-seryl-[protein] + ADP + H(+). It carries out the reaction L-threonyl-[protein] + ATP = O-phospho-L-threonyl-[protein] + ADP + H(+). Its function is as follows. Serine/threonine-protein kinase that plays a critical role in initiating innate immune response against foreign pathogens. Involved in Toll-like receptor (TLR) and IL-1R signaling pathways. Is rapidly recruited by MYD88 to the receptor-signaling complex upon TLR activation to form the Myddosome together with IRAK2. Phosphorylates initially IRAK1, thus stimulating the kinase activity and intensive autophosphorylation of IRAK1. Phosphorylates E3 ubiquitin ligases Pellino proteins (PELI1, PELI2 and PELI3) to promote pellino-mediated polyubiquitination of IRAK1. Then, the ubiquitin-binding domain of IKBKG/NEMO binds to polyubiquitinated IRAK1 bringing together the IRAK1-MAP3K7/TAK1-TRAF6 complex and the NEMO-IKKA-IKKB complex. In turn, MAP3K7/TAK1 activates IKKs (CHUK/IKKA and IKBKB/IKKB) leading to NF-kappa-B nuclear translocation and activation. Alternatively, phosphorylates TIRAP to promote its ubiquitination and subsequent degradation. Phosphorylates NCF1 and regulates NADPH oxidase activation after LPS stimulation suggesting a similar mechanism during microbial infections. This chain is Interleukin-1 receptor-associated kinase 4 (IRAK4), found in Homo sapiens (Human).